Consider the following 130-residue polypeptide: Acidic phospholipase A2 daboiatoxin B chain (130 aa).

Residues 1 to 8 (MCLIGVEG) form the signal peptide. 7 disulfide bridges follow: cysteine 34-cysteine 123, cysteine 36-cysteine 52, cysteine 51-cysteine 103, cysteine 57-cysteine 130, cysteine 58-cysteine 96, cysteine 65-cysteine 89, and cysteine 83-cysteine 94. Residues tyrosine 35, glycine 37, and glycine 39 each contribute to the Ca(2+) site. The active site involves histidine 55. Aspartate 56 is a binding site for Ca(2+). Aspartate 97 is an active-site residue.

This sequence belongs to the phospholipase A2 family. Group II subfamily. D49 sub-subfamily. In terms of assembly, heterodimer of an acidic protein having phospholipase A2 activity (B chain) and an A chain which weakly inhibits the B chain enzymatic activity but potentiates its lethal potency. It depends on Ca(2+) as a cofactor. As to expression, expressed by the venom gland.

The protein resides in the secreted. It catalyses the reaction a 1,2-diacyl-sn-glycero-3-phosphocholine + H2O = a 1-acyl-sn-glycero-3-phosphocholine + a fatty acid + H(+). Monomer: Snake venom phospholipase A2 (PLA2) that shows a high PLA2 activity (2110 umol/min/mg). In terms of biological role, heterodimer (A and B chains): snake venom phospholipase A2 that shows a moderate PLA2 activity (1377 umol/min/mg). Acts as a presynaptic neurotoxin. In vivo, induces edema and produces neurotoxic symptoms in mice. It exhibits indirect hemolysis and a strong myonecrotic activity and is cytotoxic. PLA2 catalyzes the calcium-dependent hydrolysis of the 2-acyl groups in 3-sn-phosphoglycerides. This chain is Acidic phospholipase A2 daboiatoxin B chain, found in Daboia siamensis (Eastern Russel's viper).